The chain runs to 457 residues: NADP-specific glutamate dehydrogenase (457 aa).

The active site involves Lys-111.

Belongs to the Glu/Leu/Phe/Val dehydrogenases family. As to quaternary structure, homohexamer.

The enzyme catalyses L-glutamate + NADP(+) + H2O = 2-oxoglutarate + NH4(+) + NADPH + H(+). The polypeptide is NADP-specific glutamate dehydrogenase (gdhA) (Agaricus bisporus (White button mushroom)).